The chain runs to 473 residues: tRNA modification GTPase MnmE (473 aa).

(6S)-5-formyl-5,6,7,8-tetrahydrofolate is bound by residues arginine 30, glutamate 95, and arginine 134. The TrmE-type G domain occupies 230 to 394 (GVAAVIAGRP…LKSTMAGMVE (165 aa)). GTP-binding positions include 240-245 (NAGKST), 259-265 (SHMPGTT), and 284-287 (DTAG). Mg(2+) contacts are provided by serine 244 and threonine 265. Position 473 (lysine 473) interacts with (6S)-5-formyl-5,6,7,8-tetrahydrofolate.

It belongs to the TRAFAC class TrmE-Era-EngA-EngB-Septin-like GTPase superfamily. TrmE GTPase family. As to quaternary structure, homodimer. Heterotetramer of two MnmE and two MnmG subunits. K(+) serves as cofactor.

The protein localises to the cytoplasm. Its function is as follows. Exhibits a very high intrinsic GTPase hydrolysis rate. Involved in the addition of a carboxymethylaminomethyl (cmnm) group at the wobble position (U34) of certain tRNAs, forming tRNA-cmnm(5)s(2)U34. In Chlorobium phaeovibrioides (strain DSM 265 / 1930) (Prosthecochloris vibrioformis (strain DSM 265)), this protein is tRNA modification GTPase MnmE.